We begin with the raw amino-acid sequence, 126 residues long: Aspartate 1-decarboxylase (126 aa).

The active-site Schiff-base intermediate with substrate; via pyruvic acid is the serine 25. Serine 25 carries the post-translational modification Pyruvic acid (Ser). Threonine 57 lines the substrate pocket. Tyrosine 58 serves as the catalytic Proton donor. 73–75 (GAA) contacts substrate.

It belongs to the PanD family. Heterooctamer of four alpha and four beta subunits. Requires pyruvate as cofactor. Post-translationally, is synthesized initially as an inactive proenzyme, which is activated by self-cleavage at a specific serine bond to produce a beta-subunit with a hydroxyl group at its C-terminus and an alpha-subunit with a pyruvoyl group at its N-terminus.

The protein resides in the cytoplasm. The enzyme catalyses L-aspartate + H(+) = beta-alanine + CO2. It participates in cofactor biosynthesis; (R)-pantothenate biosynthesis; beta-alanine from L-aspartate: step 1/1. Functionally, catalyzes the pyruvoyl-dependent decarboxylation of aspartate to produce beta-alanine. This is Aspartate 1-decarboxylase from Methylococcus capsulatus (strain ATCC 33009 / NCIMB 11132 / Bath).